We begin with the raw amino-acid sequence, 140 residues long: Nucleoside diphosphate kinase (140 aa).

Residues lysine 11, phenylalanine 59, arginine 87, threonine 93, arginine 104, and asparagine 114 each coordinate ATP. Histidine 117 functions as the Pros-phosphohistidine intermediate in the catalytic mechanism.

Belongs to the NDK family. In terms of assembly, homotetramer. Mg(2+) serves as cofactor.

It localises to the cytoplasm. It carries out the reaction a 2'-deoxyribonucleoside 5'-diphosphate + ATP = a 2'-deoxyribonucleoside 5'-triphosphate + ADP. The enzyme catalyses a ribonucleoside 5'-diphosphate + ATP = a ribonucleoside 5'-triphosphate + ADP. Major role in the synthesis of nucleoside triphosphates other than ATP. The ATP gamma phosphate is transferred to the NDP beta phosphate via a ping-pong mechanism, using a phosphorylated active-site intermediate. The protein is Nucleoside diphosphate kinase of Rhodospirillum centenum (strain ATCC 51521 / SW).